Consider the following 214-residue polypeptide: Small ribosomal subunit protein eS6 (214 aa).

This sequence belongs to the eukaryotic ribosomal protein eS6 family.

The sequence is that of Small ribosomal subunit protein eS6 from Saccharolobus solfataricus (strain ATCC 35092 / DSM 1617 / JCM 11322 / P2) (Sulfolobus solfataricus).